Reading from the N-terminus, the 322-residue chain is Nuclease 1, mitochondrial (322 aa).

The Proton acceptor role is filled by H142. N174 contacts Mg(2+).

Belongs to the DNA/RNA non-specific endonuclease family. In terms of assembly, homodimer. Requires Mn(2+) as cofactor. Mg(2+) serves as cofactor.

It localises to the mitochondrion inner membrane. In terms of biological role, this enzyme has both RNase and DNase activity. It degrades single-stranded DNA and RNA. The chain is Nuclease 1, mitochondrial (pnu1) from Schizosaccharomyces pombe (strain 972 / ATCC 24843) (Fission yeast).